A 469-amino-acid chain; its full sequence is Trigger factor (469 aa).

The region spanning 165 to 250 is the PPIase FKBP-type domain; it reads GDRVTIDYIG…VKAVCKSDEL (86 aa). Residues 444–460 are compositionally biased toward basic and acidic residues; that stretch reads DLTEKKPLKKKTAEKVS. Positions 444–469 are disordered; sequence DLTEKKPLKKKTAEKVSTKKKAPKKS.

It belongs to the FKBP-type PPIase family. Tig subfamily.

It is found in the cytoplasm. It carries out the reaction [protein]-peptidylproline (omega=180) = [protein]-peptidylproline (omega=0). Its function is as follows. Involved in protein export. Acts as a chaperone by maintaining the newly synthesized protein in an open conformation. Functions as a peptidyl-prolyl cis-trans isomerase. This Bartonella henselae (strain ATCC 49882 / DSM 28221 / CCUG 30454 / Houston 1) (Rochalimaea henselae) protein is Trigger factor.